We begin with the raw amino-acid sequence, 1706 residues long: Bifunctional hemolysin/adenylate cyclase (1706 aa).

The interval 1-399 (MQQSHQAGYA…RRPSLGAVER (399 aa)) is a, catalytic. Residue 349–356 (AYGVAGKS) participates in ATP binding. The disordered stretch occupies residues 383–405 (VPASPGLRRPSLGAVERQDSGYD). A b, Ala/Gly-rich region spans residues 400–912 (QDSGYDSLDG…LKHSIKLDVI (513 aa)). The tract at residues 500–698 (LSAAVFGLGE…SVVGAPVAVV (199 aa)) is required for interaction with CyaC. N6-palmitoyl lysine attachment occurs at residues Lys860 and Lys983. Residues 913-1656 (GGDGDDVVLA…RDADHRVEII (744 aa)) form a c region. Hemolysin-type calcium-binding repeat units follow at residues 1014-1031 (IGGA…DNFL), 1032-1049 (AGGS…NDTL), 1050-1067 (VGGE…DDVF), 1155-1172 (WGHD…DDIL), 1173-1190 (RGGL…NDIF), 1279-1296 (MGQG…DDLL), 1297-1314 (FGGD…NDTL), 1315-1332 (YGGL…NDWF), 1335-1352 (TQAR…VDTV), 1411-1428 (TGDA…ADVL), 1429-1446 (AGGE…DDQL), 1447-1464 (SGDA…DDWF), 1468-1484 (AANA…RDTV), 1537-1554 (IGDA…NDVL), 1555-1572 (SGGA…SDLL), 1573-1590 (SGDA…DDTY), and 1603-1620 (ESGG…ADQL). Residues 1657–1706 (HAANQAVDQAGIEKLVEAMAQYPDPGAAAAAPPAARVPDTLMQSLAVNWR) are d, Asp/Gly-rich.

This sequence in the N-terminal section; belongs to the adenylyl cyclase class-2 family. The protein in the C-terminal section; belongs to the RTX prokaryotic toxin family. Post-translationally, released in a processed form. In terms of processing, palmitoylated at Lys-860 and Lys-983 by CyaC. The toxin only becomes active when modified in position Lys-983: palmitoylation is required for efficient membrane insertion and pore formation of the acylated Hemolysin chain.

The protein resides in the secreted. Its subcellular location is the host cell membrane. The catalysed reaction is ATP = 3',5'-cyclic AMP + diphosphate. Activated by host calmodulin. Bifunctional adenylate cyclase toxin-hemolysin that plays a crucial role in host colonization. It causes whooping cough by acting on mammalian cells by elevating cAMP-concentration and thus disrupts normal cell function. In terms of biological role, adenylate cyclase that is activated by host intracellular calmodulin and catalyzes un-regulated conversion of ATP to cAMP, thereby impairing microbicidal functions of immune effector cells and inducing apoptosis of lung macrophages. Functionally, hemolysin that forms small cation-selective membrane channels, leading to hemolytic activity. The hemolytic activity of CyaA is weak compared with that of the HlyA of E.coli. The sequence is that of Bifunctional hemolysin/adenylate cyclase (cya) from Bordetella pertussis (strain Tohama I / ATCC BAA-589 / NCTC 13251).